A 178-amino-acid polypeptide reads, in one-letter code: Large ribosomal subunit protein uL6 (178 aa).

This sequence belongs to the universal ribosomal protein uL6 family. Part of the 50S ribosomal subunit.

In terms of biological role, this protein binds to the 23S rRNA, and is important in its secondary structure. It is located near the subunit interface in the base of the L7/L12 stalk, and near the tRNA binding site of the peptidyltransferase center. In Helicobacter acinonychis (strain Sheeba), this protein is Large ribosomal subunit protein uL6.